Reading from the N-terminus, the 465-residue chain is Cysteine--tRNA ligase (465 aa).

Cys28 lines the Zn(2+) pocket. The short motif at 30-40 (PTVYNYIHIGN) is the 'HIGH' region element. Zn(2+) contacts are provided by Cys208, His233, and Glu237. A 'KMSKS' region motif is present at residues 265–269 (KMSKS). Lys268 is an ATP binding site.

Belongs to the class-I aminoacyl-tRNA synthetase family. As to quaternary structure, monomer. The cofactor is Zn(2+).

Its subcellular location is the cytoplasm. It carries out the reaction tRNA(Cys) + L-cysteine + ATP = L-cysteinyl-tRNA(Cys) + AMP + diphosphate. This Exiguobacterium sibiricum (strain DSM 17290 / CCUG 55495 / CIP 109462 / JCM 13490 / 255-15) protein is Cysteine--tRNA ligase.